The primary structure comprises 307 residues: Protein pid-3 (307 aa).

In terms of assembly, component of the pid-1 variant of the PETISCO complex (also called the pid-3, erh-2, tofu-6, and ife-3 small RNA complex) containing at least pid-1, tofu-6, ife-3, pid-3, and erh-2, which is required for the biogenesis of a class of 21 nucleotide PIWI-interacting RNAs (piRNAs) that possess a uracil residue at the 5'-end (also called 21U-RNAs). Within the complex interacts with pid-1; the interaction is direct. Component of the tost-1 variant of the PETISCO complex (also called the pid-3, erh-2, tofu-6, and ife-3 small RNA complex) containing at least tost-1, tofu-6, ife-3, pid-3, and erh-2, which plays an essential role in embryogenesis. Within the complex interacts with tost-1. Within the pid-1 and tost-1 variants of the PETISCO complexes interacts with tofu-6 (via the RRM domain) and erh-2. In contrast to the pid-1 variant of the PETISCO complex, the tost-1 variant of the PETISCO complex plays a minor role in the biogenesis of 21U-RNAs. Expressed in the germline (at protein level).

It localises to the cytoplasm. It is found in the perinuclear region. The protein localises to the nucleus. In terms of biological role, component of the pid-1 and tost-1 variants of the PETISCO complexes, which have roles in the biogenesis of a class of 21 nucleotide PIWI-interacting RNAs (piRNAs) that possess a uracil residue at the 5'-end (also called 21U-RNAs) and embryogenesis, respectively. Within the pid-1 variant of the PETISCO complex may stabilize 21U-RNA precursor molecules. Promotes the biogenesis of 21U-RNAs. Required for chromosome segregation and cell division in early embryos. The protein is Protein pid-3 of Caenorhabditis elegans.